The sequence spans 446 residues: Lysine histidine transporter 1 (446 aa).

Topologically, residues 1-37 (MVAQAPHDDHQDDEKLAAARQKEIEDWLPITSSRNAK) are cytoplasmic. A helical membrane pass occupies residues 38-58 (WWYSAFHNVTAMVGAGVLGLP). Topologically, residues 59–63 (YAMSQ) are extracellular. The helical transmembrane segment at 64–84 (LGWGPGIAVLVLSWVITLYTL) threads the bilayer. The Cytoplasmic segment spans residues 85–115 (WQMVEMHEMVPGKRFDRYHELGQHAFGEKLG). The chain crosses the membrane as a helical span at residues 116–136 (LYIVVPQQLIVEIGVCIVYMV). At 137-157 (TGGKSLKKFHELVCDDCKPIK) the chain is on the extracellular side. A helical transmembrane segment spans residues 158–178 (LTYFIMIFASVHFVLSHLPNF). Over 179 to 180 (NS) the chain is Cytoplasmic. Residues 181 to 201 (ISGVSLAAAVMSLSYSTIAWA) traverse the membrane as a helical segment. Residues 202–227 (SSASKGVQEDVQYGYKAKTTAGTVFN) are Extracellular-facing. Residues 228 to 248 (FFSGLGDVAFAYAGHNVVLEI) form a helical membrane-spanning segment. At 249–268 (QATIPSTPEKPSKGPMWRGV) the chain is on the cytoplasmic side. A helical transmembrane segment spans residues 269 to 289 (IVAYIVVALCYFPVALVGYYI). Residues 290–305 (FGNGVEDNILMSLKKP) lie on the Extracellular side of the membrane. A helical transmembrane segment spans residues 306–326 (AWLIATANIFVVIHVIGSYQI). The Cytoplasmic portion of the chain corresponds to 327–352 (YAMPVFDMMETLLVKKLNFRPTTTLR). A helical membrane pass occupies residues 353-375 (FFVRNFYVAATMFVGMTFPFFGG). Residues 376 to 378 (LLA) lie on the Extracellular side of the membrane. A helical transmembrane segment spans residues 379-401 (FFGGFAFAPTTYFLPCVIWLAIY). The Cytoplasmic segment spans residues 402–409 (KPKKYSLS). The chain crosses the membrane as a helical span at residues 410-430 (WWANWVCIVFGLFLMVLSPIG). The Extracellular segment spans residues 431–446 (GLRTIVIQAKGYKFYS).

The protein belongs to the amino acid/polyamine transporter 2 family. Amino acid/auxin permease (AAAP) (TC 2.A.18.2) subfamily. Expressed in roots, stems, flowers, leaves, siliques and pollen. Found in the tips of roots and in the rhizodermis of emerging roots and in lateral roots. Higher expression in older leaves as compared to joung leaves. Detected first at the hydathodes, then in the epidermis and finally in matures leaves in all mesophyll cells. Not detected in vascular bundles or in seeds.

It localises to the cell membrane. Inhibited by carbonlycyanide m-chlorophenylhydrazone (CCCP) and DEPC. Its function is as follows. Amino acid-proton symporter. Transporter with a broad specificity for histidine, lysine, glutamic acid, alanine, serine, proline and glycine. Involved in both apoplastic transport of amino acids in leaves and their uptake by roots. The chain is Lysine histidine transporter 1 (LHT1) from Arabidopsis thaliana (Mouse-ear cress).